The following is a 395-amino-acid chain: Ribose-phosphate pyrophosphokinase 2, chloroplastic (395 aa).

Low complexity predominate over residues 1–23 (MASPAPRSLSSSSSSSSSSFCPS). The interval 1-33 (MASPAPRSLSSSSSSSSSSFCPSISPPPRSPSR) is disordered. Residues 1–42 (MASPAPRSLSSSSSSSSSSFCPSISPPPRSPSRASLPFSVKC) constitute a chloroplast transit peptide. Mg(2+)-binding residues include Asp209, His211, Asp220, and Asp224. Residues 295–310 (GKVAVMLDDMIDTAGT) are binding of phosphoribosylpyrophosphate.

Belongs to the ribose-phosphate pyrophosphokinase family.

Its subcellular location is the plastid. It localises to the chloroplast. The catalysed reaction is D-ribose 5-phosphate + ATP = 5-phospho-alpha-D-ribose 1-diphosphate + AMP + H(+). The protein is Ribose-phosphate pyrophosphokinase 2, chloroplastic (PRS2) of Spinacia oleracea (Spinach).